The sequence spans 269 residues: Surfeit locus protein 4 (269 aa).

5 helical membrane passes run 65 to 85, 92 to 112, 179 to 199, 203 to 223, and 242 to 262; these read LASS…VLVL, YACF…SILW, FFSI…AIGF, LAAL…NAFW, and TMSV…GVSM. The Di-lysine motif signature appears at 266 to 269; that stretch reads KKEW.

The protein belongs to the SURF4 family. As to quaternary structure, found in a complex composed at least of SURF4, TMED2 and TMED10. May interact with LMAN1. Interacts with ZFYVE27 and with KIF5A in a ZFYVE27-dependent manner. Interacts with STING1. Interacts with SAR1B. Interacts with TMEM41B.

Its subcellular location is the endoplasmic reticulum membrane. The protein localises to the endoplasmic reticulum-Golgi intermediate compartment membrane. It localises to the golgi apparatus membrane. Functionally, endoplasmic reticulum cargo receptor that mediates the export of lipoproteins by recruiting cargos into COPII vesicles to facilitate their secretion. Acts as a cargo receptor for lipoproteins bearing both APOB and APOA1, thereby regulating lipoprotein delivery and the maintenance of lipid homeostasis. Synergizes with the GTPase SAR1B to mediate transport of circulating lipoproteins. Promotes the secretion of PCSK9. Also mediates the efficient secretion of erythropoietin (EPO). May also play a role in the maintenance of the architecture of the endoplasmic reticulum-Golgi intermediate compartment and of the Golgi. The protein is Surfeit locus protein 4 of Mus musculus (Mouse).